Consider the following 68-residue polypeptide: Probable tautomerase jhp_0858 (68 aa).

Residue Pro-2 is the Proton acceptor; via imino nitrogen of the active site.

The protein belongs to the 4-oxalocrotonate tautomerase family.

The chain is Probable tautomerase jhp_0858 from Helicobacter pylori (strain J99 / ATCC 700824) (Campylobacter pylori J99).